Reading from the N-terminus, the 551-residue chain is Nose resistant to fluoxetine protein 5 (551 aa).

An N-terminal signal peptide occupies residues 1–20 (MSRNFHIFFLLVSIIQVGNS). Residues cysteine 151 and cysteine 232 are joined by a disulfide bond. The interval 241–265 (EDSEQEEGNVETTVAPTPDDDNSTL) is disordered.

Belongs to the BPI/LBP/Plunc superfamily. BPI/LBP family. In terms of assembly, interacts with ttr-52. As to expression, expressed in the body wall muscle cells and detected at the basal surface of pharyngeal cells and basal-lateral membranes of the intestine.

The protein localises to the secreted. Functionally, plays a role in the uptake of a range of molecules including phosphatidylserine, lipids and xenobiotic compounds from the intestine to surrounding tissues. Possesses lipid transfer activity. Mediates transport of lipids from intestine to reproductive tract. Binds phosphatidylserine. Plays a role in efficient clearance of cell corpses by mediating phosphatidylserine appearance on phagocytic cells, thus promoting phagocytic engulfment of apoptotic cells. Vital for embryonic development. This is Nose resistant to fluoxetine protein 5 from Caenorhabditis elegans.